Here is a 355-residue protein sequence, read N- to C-terminus: Na(+)/H(+) exchange regulatory cofactor NHE-RF1 (355 aa).

Ser2 is modified (N-acetylserine). 2 positions are modified to phosphoserine: Ser2 and Ser46. Residues 14–94 form the PDZ 1 domain; it reads LCCLEKGPNG…AVRLLVVDPE (81 aa). 2 stretches are compositionally biased toward basic and acidic residues: residues 110–119 and 127–146; these read LLRPQEKSEQ and DTHEAGDQNEAEKSHLRELR. A disordered region spans residues 110–146; it reads LLRPQEKSEQAEPPAAADTHEAGDQNEAEKSHLRELR. The 81-residue stretch at 149-229 folds into the PDZ 2 domain; it reads LCTMKKGPNG…EAKLLVVDKE (81 aa). Residues 244–355 are disordered; the sequence is EHLDGPLPEP…SKKNELFSNL (112 aa). Over residues 259-268 the composition is skewed to basic and acidic residues; that stretch reads IQKESSREAL. 4 positions are modified to phosphoserine: Ser264, Ser275, Ser285, and Ser286. Low complexity predominate over residues 270–286; sequence EPASESPRPALARSASS. Thr288 carries the post-translational modification Phosphothreonine. Phosphoserine is present on residues Ser289, Ser294, and Ser297. Residues 303–323 show a composition bias toward low complexity; that stretch reads STEPSSTSSSSSDPILDLNIS. Positions 345–355 are enriched in basic and acidic residues; that stretch reads WSKKNELFSNL.

As to quaternary structure, homodimer, and heterodimer with NHERF2. Binds the N-termini of EZR, RDX and MSN. Binds the C-termini of PDGFRA, PDGFRB, ADRB2 and NOS2. Binds ARHGAP17, EPI64, RACK1, OPRK1, GNAQ, CTNNB1, PLCB3 and CLCN3. Forms a complex with CFTR and SLC4A7. Forms a complex with SLC4A7 and ATP6V1B1. Binds PDZK1. Binds the C-terminus of PAG1. In resting T-cells, part of a PAG1-NHERF1-MSN complex which is disrupted upon TCR activation. Directly interacts with HTR4. Interacts with MCC. Interacts with TRPC4 (via the PDZ-binding domain). Interacts (via the PDZ 1 domain) with PODXL (via the C-terminal PDZ-binding motif DTHL); interaction is not detected in glomerular epithelium cells. Interacts (via the PDZ 1 domain) with PODXL (via the C-terminal PDZ-binding motif DTHL); the interaction take place early in the secretory pathway and is necessary for its apical membrane sorting. Interacts with SLC34A1. Interacts with CFTR, SLC26A3 and SLC26A6. Interacts (via PDZ domains) with ACE2 (via PDZ-binding motif); the interaction may enhance ACE2 membrane residence. As to expression, expressed in spermatogenic cells.

The protein resides in the cytoplasm. It is found in the apical cell membrane. It localises to the cell projection. The protein localises to the filopodium. Its subcellular location is the ruffle. The protein resides in the microvillus. It is found in the endomembrane system. In terms of biological role, scaffold protein that connects plasma membrane proteins with members of the ezrin/moesin/radixin family and thereby helps to link them to the actin cytoskeleton and to regulate their surface expression. Necessary for recycling of internalized ADRB2. Was first known to play a role in the regulation of the activity and subcellular location of SLC9A3. Necessary for cAMP-mediated phosphorylation and inhibition of SLC9A3. May enhance Wnt signaling. May participate in HTR4 targeting to microvilli. Involved in the regulation of phosphate reabsorption in the renal proximal tubules. Involved in sperm capacitation. May participate in the regulation of the chloride and bicarbonate homeostasis in spermatozoa. The protein is Na(+)/H(+) exchange regulatory cofactor NHE-RF1 (Nherf1) of Mus musculus (Mouse).